The chain runs to 176 residues: Tumor necrosis factor receptor superfamily member 23 (176 aa).

The first 29 residues, 1–29 (MVTFSHVSSLSHWFLLLLLLNLFLPVIFA), serve as a signal peptide directing secretion. TNFR-Cys repeat units follow at residues 37-72 (NCPDGEYQSNDVCCKTCPSGTFVKAPCKIPHTQGQC), 74-114 (KCHP…DRKC), and 115-155 (ECQI…NTVC). Cystine bridges form between Cys-38-Cys-49, Cys-50-Cys-63, Cys-53-Cys-72, Cys-75-Cys-90, Cys-93-Cys-106, Cys-96-Cys-114, Cys-116-Cys-131, Cys-134-Cys-147, and Cys-137-Cys-155. A glycan (N-linked (GlcNAc...) asparagine) is linked at Asn-148. Residue Cys-155 is the site of GPI-anchor amidated cysteine attachment. Residues 156-176 (SSSVSNPRNWLFLLMLIVFCI) constitute a propeptide, removed in mature form.

Ubiquitous.

The protein resides in the cell membrane. Receptor for the cytotoxic ligand TRAIL. Lacks a cytoplasmic death domain and hence is not capable of inducing apoptosis. May protect cells against TRAIL mediated apoptosis through ligand competition. Cannot induce the NF-kappa-B pathway. This chain is Tumor necrosis factor receptor superfamily member 23 (Tnfrsf23), found in Mus musculus (Mouse).